Here is a 339-residue protein sequence, read N- to C-terminus: NADH-quinone oxidoreductase subunit H (339 aa).

9 consecutive transmembrane segments (helical) span residues 9–29, 50–70, 82–102, 115–135, 161–181, 187–207, 235–255, 275–295, and 311–331; these read IFPL…LILC, PNVV…KLLF, ILFI…WAVI, VGVL…IIAG, MGLV…SGII, MPWW…ISVL, MGFA…SAMT, IPGF…FLWI, and GWKV…SVLV.

The protein belongs to the complex I subunit 1 family. As to quaternary structure, NDH-1 is composed of 14 different subunits. Subunits NuoA, H, J, K, L, M, N constitute the membrane sector of the complex.

It is found in the cell inner membrane. It carries out the reaction a quinone + NADH + 5 H(+)(in) = a quinol + NAD(+) + 4 H(+)(out). Its function is as follows. NDH-1 shuttles electrons from NADH, via FMN and iron-sulfur (Fe-S) centers, to quinones in the respiratory chain. The immediate electron acceptor for the enzyme in this species is believed to be ubiquinone. Couples the redox reaction to proton translocation (for every two electrons transferred, four hydrogen ions are translocated across the cytoplasmic membrane), and thus conserves the redox energy in a proton gradient. This subunit may bind ubiquinone. This Rickettsia conorii (strain ATCC VR-613 / Malish 7) protein is NADH-quinone oxidoreductase subunit H.